The sequence spans 315 residues: Olfactory receptor 5M10 (315 aa).

At 1–25 (MLSPNHTIVTEFILLGLTDDPVLEK) the chain is on the extracellular side. An N-linked (GlcNAc...) asparagine glycan is attached at N5. Residues 26–46 (ILFGVFLAIYLITLAGNLCMI) form a helical membrane-spanning segment. At 47-54 (LLIRTNSQ) the chain is on the cytoplasmic side. A helical transmembrane segment spans residues 55-75 (LQTPMYFFLGHLSFVDICYSS). Topologically, residues 76-99 (NVTPNMLHNFLSEQKTISYAGCFT) are extracellular. C97 and C189 form a disulfide bridge. Residues 100 to 120 (QCLLFIALVITEFYFLASMAL) traverse the membrane as a helical segment. At 121–139 (DRYVAICSPLHYSSRMSKN) the chain is on the cytoplasmic side. A helical membrane pass occupies residues 140 to 160 (ICISLVTVPYMYGFLNGLSQT). Topologically, residues 161 to 196 (LLTFHLSFCGSLEINHFYCADPPLIMLACSDTRVKK) are extracellular. The chain crosses the membrane as a helical span at residues 197-217 (MAMFVVAGFTLSSSLFIILLS). Topologically, residues 218-237 (YLFIFAAIFRIRSAEGRHKA) are cytoplasmic. A helical transmembrane segment spans residues 238 to 258 (FSTCASHLTIVTLFYGTLFCM). Residues 259-271 (YVRPPSEKSVEES) are Extracellular-facing. Residues 272–292 (KIIAVFYTFLSPMLNPLIYSL) traverse the membrane as a helical segment. The Cytoplasmic portion of the chain corresponds to 293-315 (RNRDVILAIQQMIRGKSFCKIAV).

The protein belongs to the G-protein coupled receptor 1 family.

It is found in the cell membrane. Odorant receptor. In Homo sapiens (Human), this protein is Olfactory receptor 5M10 (OR5M10).